Consider the following 102-residue polypeptide: Putative toxin YafQ (102 aa).

It belongs to the RelE toxin family. YafQ subfamily.

Functionally, toxic component of a type II toxin-antitoxin (TA) system. Its cognate antitoxin is RelB. This Haemophilus influenzae (strain ATCC 51907 / DSM 11121 / KW20 / Rd) protein is Putative toxin YafQ.